A 1057-amino-acid polypeptide reads, in one-letter code: Carbamoyl phosphate synthase large chain (1057 aa).

Residues 1 to 401 (MPKRNDIKTI…SLLKAIRSLE (401 aa)) are carboxyphosphate synthetic domain. Positions 129, 169, 175, 176, 208, 210, 215, 241, 242, 243, 284, and 298 each coordinate ATP. One can recognise an ATP-grasp 1 domain in the interval 133–327 (RTLMNDLNVP…IAKLAAKIAV (195 aa)). Mg(2+) is bound by residues glutamine 284, glutamate 298, and asparagine 300. Mn(2+)-binding residues include glutamine 284, glutamate 298, and asparagine 300. Residues 402 to 546 (YGVHHLGLPN…YGTYETENES (145 aa)) are oligomerization domain. The interval 547–929 (IVTDKEKILV…ALFKGLTGSG (383 aa)) is carbamoyl phosphate synthetic domain. The region spanning 671–861 (EALLRKINVP…MAQLAMRAII (191 aa)) is the ATP-grasp 2 domain. Residues arginine 707, arginine 746, leucine 748, glutamate 752, glycine 777, valine 778, histidine 779, serine 780, glutamine 820, and glutamate 832 each coordinate ATP. The Mg(2+) site is built by glutamine 820, glutamate 832, and asparagine 834. 3 residues coordinate Mn(2+): glutamine 820, glutamate 832, and asparagine 834. The MGS-like domain occupies 930 to 1057 (VEVKDHGTVL…ESMTFTMRQM (128 aa)). Residues 930–1057 (VEVKDHGTVL…ESMTFTMRQM (128 aa)) form an allosteric domain region.

It belongs to the CarB family. Composed of two chains; the small (or glutamine) chain promotes the hydrolysis of glutamine to ammonia, which is used by the large (or ammonia) chain to synthesize carbamoyl phosphate. Tetramer of heterodimers (alpha,beta)4. Mg(2+) serves as cofactor. It depends on Mn(2+) as a cofactor.

It carries out the reaction hydrogencarbonate + L-glutamine + 2 ATP + H2O = carbamoyl phosphate + L-glutamate + 2 ADP + phosphate + 2 H(+). The catalysed reaction is hydrogencarbonate + NH4(+) + 2 ATP = carbamoyl phosphate + 2 ADP + phosphate + 2 H(+). It participates in amino-acid biosynthesis; L-arginine biosynthesis; carbamoyl phosphate from bicarbonate: step 1/1. The protein operates within pyrimidine metabolism; UMP biosynthesis via de novo pathway; (S)-dihydroorotate from bicarbonate: step 1/3. Functionally, large subunit of the glutamine-dependent carbamoyl phosphate synthetase (CPSase). CPSase catalyzes the formation of carbamoyl phosphate from the ammonia moiety of glutamine, carbonate, and phosphate donated by ATP, constituting the first step of 2 biosynthetic pathways, one leading to arginine and/or urea and the other to pyrimidine nucleotides. The large subunit (synthetase) binds the substrates ammonia (free or transferred from glutamine from the small subunit), hydrogencarbonate and ATP and carries out an ATP-coupled ligase reaction, activating hydrogencarbonate by forming carboxy phosphate which reacts with ammonia to form carbamoyl phosphate. This is Carbamoyl phosphate synthase large chain from Staphylococcus aureus (strain USA300 / TCH1516).